The primary structure comprises 253 residues: tRNA uridine(34) hydroxylase (253 aa).

Residues 127–221 form the Rhodanese domain; it reads HGRPLVLLDT…YFEDVGGEGY (95 aa). The active-site Cysteine persulfide intermediate is Cys-181.

This sequence belongs to the TrhO family.

The enzyme catalyses uridine(34) in tRNA + AH2 + O2 = 5-hydroxyuridine(34) in tRNA + A + H2O. Its function is as follows. Catalyzes oxygen-dependent 5-hydroxyuridine (ho5U) modification at position 34 in tRNAs. The sequence is that of tRNA uridine(34) hydroxylase from Xanthomonas campestris pv. campestris (strain 8004).